The chain runs to 386 residues: NifS-like protein (386 aa).

Pyridoxal 5'-phosphate is bound by residues 58–59 and 184–186; these read SE and SIN.

The protein belongs to the class-V pyridoxal-phosphate-dependent aminotransferase family. NifS/IscS subfamily. It depends on pyridoxal 5'-phosphate as a cofactor.

It is found in the virion. This chain is NifS-like protein, found in Ornithodoros (relapsing fever ticks).